We begin with the raw amino-acid sequence, 772 residues long: Phosphatidylinositol 4-phosphate 5-kinase 5 (772 aa).

The segment at Ala22–Arg56 is disordered. The segment covering Thr43–Thr52 has biased composition (acidic residues). MORN repeat units follow at residues Tyr75–Met97, Tyr98–Thr120, Tyr121–Ala143, Tyr144–Ala166, Tyr167–Tyr189, Tyr190–Arg212, Tyr213–Phe235, and Tyr236–Glu257. Residues Ser377–Phe768 enclose the PIPK domain. Residues Ser646–Arg665 form a disordered region. The segment at Tyr728–Ser749 is activation loop.

The catalysed reaction is a 1,2-diacyl-sn-glycero-3-phospho-(1D-myo-inositol 4-phosphate) + ATP = a 1,2-diacyl-sn-glycero-3-phospho-(1D-myo-inositol-4,5-bisphosphate) + ADP + H(+). The polypeptide is Phosphatidylinositol 4-phosphate 5-kinase 5 (PIP5K5) (Arabidopsis thaliana (Mouse-ear cress)).